Here is a 403-residue protein sequence, read N- to C-terminus: Imidazolonepropionase (403 aa).

2 residues coordinate Fe(3+): His69 and His71. Residues His69 and His71 each contribute to the Zn(2+) site. The 4-imidazolone-5-propanoate site is built by Arg78, Tyr141, and His174. Tyr141 provides a ligand contact to N-formimidoyl-L-glutamate. His239 is a binding site for Fe(3+). His239 provides a ligand contact to Zn(2+). Position 242 (Gln242) interacts with 4-imidazolone-5-propanoate. Asp314 contributes to the Fe(3+) binding site. Asp314 is a binding site for Zn(2+). Residues Asn316 and Gly318 each coordinate N-formimidoyl-L-glutamate. A 4-imidazolone-5-propanoate-binding site is contributed by Ser319.

Belongs to the metallo-dependent hydrolases superfamily. HutI family. It depends on Zn(2+) as a cofactor. Fe(3+) serves as cofactor.

The protein localises to the cytoplasm. It catalyses the reaction 4-imidazolone-5-propanoate + H2O = N-formimidoyl-L-glutamate. It participates in amino-acid degradation; L-histidine degradation into L-glutamate; N-formimidoyl-L-glutamate from L-histidine: step 3/3. Its function is as follows. Catalyzes the hydrolytic cleavage of the carbon-nitrogen bond in imidazolone-5-propanoate to yield N-formimidoyl-L-glutamate. It is the third step in the universal histidine degradation pathway. This chain is Imidazolonepropionase, found in Legionella pneumophila (strain Lens).